The sequence spans 553 residues: Formate--tetrahydrofolate ligase (553 aa).

Thr64–Thr71 contributes to the ATP binding site.

This sequence belongs to the formate--tetrahydrofolate ligase family.

It carries out the reaction (6S)-5,6,7,8-tetrahydrofolate + formate + ATP = (6R)-10-formyltetrahydrofolate + ADP + phosphate. Its pathway is one-carbon metabolism; tetrahydrofolate interconversion. In Pseudothermotoga lettingae (strain ATCC BAA-301 / DSM 14385 / NBRC 107922 / TMO) (Thermotoga lettingae), this protein is Formate--tetrahydrofolate ligase.